Reading from the N-terminus, the 287-residue chain is Pyridoxal kinase PdxY (287 aa).

Substrate-binding positions include Ser-10 and 45–46 (TQ). Residues Asp-112, Ala-144, Glu-149, Lys-182, and 209–212 (RPLV) contribute to the ATP site. Residue Asp-224 participates in substrate binding.

It belongs to the pyridoxine kinase family. PdxY subfamily. As to quaternary structure, homodimer. Mg(2+) serves as cofactor.

The enzyme catalyses pyridoxal + ATP = pyridoxal 5'-phosphate + ADP + H(+). The protein operates within cofactor metabolism; pyridoxal 5'-phosphate salvage; pyridoxal 5'-phosphate from pyridoxal: step 1/1. In terms of biological role, pyridoxal kinase involved in the salvage pathway of pyridoxal 5'-phosphate (PLP). Catalyzes the phosphorylation of pyridoxal to PLP. This is Pyridoxal kinase PdxY from Escherichia coli O157:H7.